Reading from the N-terminus, the 823-residue chain is Putative ankyrin repeat domain-containing protein 20A2 (823 aa).

ANK repeat units follow at residues 66–95, 99–128, 132–161, 165–194, and 198–227; these read QHRTALHLACASGHVQVVTLLVNRKCQIDV, ENRTPLIQAVHCQEEACAVILLEHGANPNL, YGNTALHYAVYSESTSLAEKLLSHGAHIEA, DNNTPLLFAIICKKEKMVEFLLKRKASSHA, and LRRSALMLAVYYDSPGIVNILLKQNIDVFA. Disordered stretches follow at residues 301 to 343 and 355 to 402; these read VPEK…EVED and VQTL…LSEN. Residues 372 to 384 show a composition bias toward basic and acidic residues; the sequence is QERHERSEKKQPQ. 3 coiled-coil regions span residues 431 to 480, 565 to 724, and 776 to 805; these read KKLK…KQLE, EMIT…NNST, and LVLEEKSKKLMNECDHLKESLFQYEREKTE.

In Homo sapiens (Human), this protein is Putative ankyrin repeat domain-containing protein 20A2.